The primary structure comprises 546 residues: Chaperonin GroEL (546 aa).

ATP-binding positions include 30–33 (TLGP), K51, 87–91 (DGTTT), G415, 479–481 (NAA), and D495. The disordered stretch occupies residues 526-546 (KKDEPAMPAGGGMGGMGGMDF). The segment covering 534 to 546 (AGGGMGGMGGMDF) has biased composition (gly residues).

It belongs to the chaperonin (HSP60) family. As to quaternary structure, forms a cylinder of 14 subunits composed of two heptameric rings stacked back-to-back. Interacts with the co-chaperonin GroES.

It localises to the cytoplasm. The catalysed reaction is ATP + H2O + a folded polypeptide = ADP + phosphate + an unfolded polypeptide.. Its function is as follows. Together with its co-chaperonin GroES, plays an essential role in assisting protein folding. The GroEL-GroES system forms a nano-cage that allows encapsulation of the non-native substrate proteins and provides a physical environment optimized to promote and accelerate protein folding. The polypeptide is Chaperonin GroEL (Xanthomonas euvesicatoria pv. vesicatoria (strain 85-10) (Xanthomonas campestris pv. vesicatoria)).